A 78-amino-acid chain; its full sequence is Protein FAM240B (78 aa).

This sequence belongs to the FAM240 family.

The chain is Protein FAM240B from Homo sapiens (Human).